The following is a 1235-amino-acid chain: Myosin-1 (1235 aa).

The segment at 1–34 is disordered; sequence MGITKRSKDKAARAERSAGGDKSSSAKPKKATFD. Residues 9 to 19 show a composition bias toward basic and acidic residues; sequence DKAARAERSAG. Residues 41–715 enclose the Myosin motor domain; that stretch reads IGVSDLTLLS…TLFALEHMRD (675 aa). Residue 134–141 coordinates ATP; the sequence is GESGAGKT. An actin-binding region spans residues 405-487; that stretch reads SIGILDIYGF…PGIFSAMKDA (83 aa). 2 consecutive IQ domains span residues 719 to 739 and 740 to 765; these read HNMATRIQRMWRAYLAYRAEA and AIRIQRIWRKKRVGAEYLQLREEGHK. Positions 773–962 constitute a TH1 domain; it reads RRRMSILGSR…TVHTQPGEPP (190 aa). Disordered stretches follow at residues 949-1076 and 1135-1235; these read YKSS…AAKP and APPV…EDDW. Positions 982-1046 are enriched in low complexity; that stretch reads KGKLIKPGGP…PGAAATPAAA (65 aa). Residues 1050 to 1062 show a composition bias toward polar residues; that stretch reads PSHTRQQSSTSTV. Residues 1063–1073 are compositionally biased toward pro residues; that stretch reads RPPPPPPPAPA. The region spanning 1075 to 1134 is the SH3 domain; sequence KPKIMAKVLYDFAGTRENELSIKAGDMIEIVQKENNGWWLAKTPEGQAWVPAAYVEEQAP. A compositionally biased stretch (pro residues) spans 1135–1150; it reads APPVVAPRPPPPPPPA. Residues 1180-1210 show a composition bias toward polar residues; sequence SLQNRDSGMSLNGANGSGSDASRSSTPTPSI.

Belongs to the TRAFAC class myosin-kinesin ATPase superfamily. Myosin family.

The protein localises to the cytoplasm. The protein resides in the cytoskeleton. It localises to the actin patch. Its function is as follows. Type-I myosin implicated in the organization of the actin cytoskeleton. Required for proper actin cytoskeleton polarization. At the cell cortex, assembles in patch-like structures together with proteins from the actin-polymerizing machinery and promotes actin assembly. Functions as actin nucleation-promoting factor (NPF) for the Arp2/3 complex. This chain is Myosin-1 (myo-1), found in Neurospora crassa (strain ATCC 24698 / 74-OR23-1A / CBS 708.71 / DSM 1257 / FGSC 987).